The following is a 179-amino-acid chain: NADH-quinone oxidoreductase subunit B (179 aa).

4 residues coordinate [4Fe-4S] cluster: Cys35, Cys36, Cys100, and Cys129.

The protein belongs to the complex I 20 kDa subunit family. As to quaternary structure, NDH-1 is composed of 14 different subunits. Subunits NuoB, C, D, E, F, and G constitute the peripheral sector of the complex. [4Fe-4S] cluster serves as cofactor.

The protein resides in the cell inner membrane. The enzyme catalyses a quinone + NADH + 5 H(+)(in) = a quinol + NAD(+) + 4 H(+)(out). Its function is as follows. NDH-1 shuttles electrons from NADH, via FMN and iron-sulfur (Fe-S) centers, to quinones in the respiratory chain. Couples the redox reaction to proton translocation (for every two electrons transferred, four hydrogen ions are translocated across the cytoplasmic membrane), and thus conserves the redox energy in a proton gradient. This is NADH-quinone oxidoreductase subunit B from Aquifex aeolicus (strain VF5).